Reading from the N-terminus, the 299-residue chain is Taste receptor type 2 member 4 (299 aa).

The Extracellular segment spans residues 1–9 (MLRLFYFSA). A helical transmembrane segment spans residues 10-30 (IIASVILNFVGIIMNLFITVV). The Cytoplasmic portion of the chain corresponds to 31–46 (NCKTWVKSHRISSSDR). Residues 47-67 (ILFSLGITRFLMLGLFLVNTI) traverse the membrane as a helical segment. The Extracellular portion of the chain corresponds to 68–81 (YFVSSNTERSVYLS). Residues 82-102 (AFFVLCFMFLDSSSVWFVTLL) traverse the membrane as a helical segment. At 103–131 (NILYCVKITNFQHSVFLLLKRNISPKIPR) the chain is on the cytoplasmic side. Residues 132–152 (LLLACVLISAFTTCLYITLSQ) form a helical membrane-spanning segment. Topologically, residues 153–172 (ASPFPELVTTRNNTSFNISE) are extracellular. 3 N-linked (GlcNAc...) asparagine glycosylation sites follow: Asn164, Asn165, and Asn169. The chain crosses the membrane as a helical span at residues 173 to 193 (GILSLVVSLVLSSSLQFIINV). Residues 194–230 (TSASLLIHSLRRHIQKMQKNATGFWNPQTEAHVGAMK) are Cytoplasmic-facing. The chain crosses the membrane as a helical span at residues 231 to 251 (LMVYFLILYIPYSVATLVQYL). Topologically, residues 252–262 (PFYAGMDMGTK) are extracellular. The helical transmembrane segment at 263-283 (SICLIFATLYSPGHSVLIIIT) threads the bilayer. At 284–299 (HPKLKTTAKKILCFKK) the chain is on the cytoplasmic side.

It belongs to the G-protein coupled receptor T2R family. As to expression, expressed in subsets of taste receptor cells of the tongue and palate epithelium and exclusively in gustducin-positive cells. Expressed on airway ciliated epithelium.

Its subcellular location is the membrane. It is found in the cell projection. The protein localises to the cilium membrane. Functionally, gustducin-coupled receptor for denatonium and N(6)-propyl-2-thiouracil implicated in the perception of bitter compounds in the oral cavity and the gastrointestinal tract. Signals through PLCB2 and the calcium-regulated cation channel TRPM5. In airway epithelial cells, binding of denatonium increases the intracellular calcium ion concentration and stimulates ciliary beat frequency. The chain is Taste receptor type 2 member 4 (TAS2R4) from Homo sapiens (Human).